The sequence spans 454 residues: Tol-Pal system protein TolB (454 aa).

Positions 1–21 are cleaved as a signal peptide; the sequence is MSLRPISLMLALLLTSAPALA.

Belongs to the TolB family. The Tol-Pal system is composed of five core proteins: the inner membrane proteins TolA, TolQ and TolR, the periplasmic protein TolB and the outer membrane protein Pal. They form a network linking the inner and outer membranes and the peptidoglycan layer.

It localises to the periplasm. Its function is as follows. Part of the Tol-Pal system, which plays a role in outer membrane invagination during cell division and is important for maintaining outer membrane integrity. The protein is Tol-Pal system protein TolB of Sphingopyxis alaskensis (strain DSM 13593 / LMG 18877 / RB2256) (Sphingomonas alaskensis).